A 317-amino-acid chain; its full sequence is Methionyl-tRNA formyltransferase (317 aa).

Position 110–113 (110–113 (SLLP)) interacts with (6S)-5,6,7,8-tetrahydrofolate.

This sequence belongs to the Fmt family.

It carries out the reaction L-methionyl-tRNA(fMet) + (6R)-10-formyltetrahydrofolate = N-formyl-L-methionyl-tRNA(fMet) + (6S)-5,6,7,8-tetrahydrofolate + H(+). Functionally, attaches a formyl group to the free amino group of methionyl-tRNA(fMet). The formyl group appears to play a dual role in the initiator identity of N-formylmethionyl-tRNA by promoting its recognition by IF2 and preventing the misappropriation of this tRNA by the elongation apparatus. This Lactiplantibacillus plantarum (strain ATCC BAA-793 / NCIMB 8826 / WCFS1) (Lactobacillus plantarum) protein is Methionyl-tRNA formyltransferase.